The primary structure comprises 92 residues: Large ribosomal subunit protein bL25 (92 aa).

It belongs to the bacterial ribosomal protein bL25 family. In terms of assembly, part of the 50S ribosomal subunit; part of the 5S rRNA/L5/L18/L25 subcomplex. Contacts the 5S rRNA. Binds to the 5S rRNA independently of L5 and L18.

In terms of biological role, this is one of the proteins that binds to the 5S RNA in the ribosome where it forms part of the central protuberance. The protein is Large ribosomal subunit protein bL25 of Photobacterium damsela subsp. piscicida (Pasteurella piscicida).